The following is a 384-amino-acid chain: Dual-specificity RNA methyltransferase RlmN (384 aa).

E93 serves as the catalytic Proton acceptor. The Radical SAM core domain occupies 99 to 339 (EETRGTLCVS…TTIRKTRGDD (241 aa)). Cysteines 106 and 344 form a disulfide. [4Fe-4S] cluster-binding residues include C113, C117, and C120. Residues 170 to 171 (GE), S202, 224 to 226 (SLH), and N301 contribute to the S-adenosyl-L-methionine site. The S-methylcysteine intermediate role is filled by C344.

The protein belongs to the radical SAM superfamily. RlmN family. The cofactor is [4Fe-4S] cluster.

It is found in the cytoplasm. The enzyme catalyses adenosine(2503) in 23S rRNA + 2 reduced [2Fe-2S]-[ferredoxin] + 2 S-adenosyl-L-methionine = 2-methyladenosine(2503) in 23S rRNA + 5'-deoxyadenosine + L-methionine + 2 oxidized [2Fe-2S]-[ferredoxin] + S-adenosyl-L-homocysteine. It catalyses the reaction adenosine(37) in tRNA + 2 reduced [2Fe-2S]-[ferredoxin] + 2 S-adenosyl-L-methionine = 2-methyladenosine(37) in tRNA + 5'-deoxyadenosine + L-methionine + 2 oxidized [2Fe-2S]-[ferredoxin] + S-adenosyl-L-homocysteine. Its function is as follows. Specifically methylates position 2 of adenine 2503 in 23S rRNA and position 2 of adenine 37 in tRNAs. m2A2503 modification seems to play a crucial role in the proofreading step occurring at the peptidyl transferase center and thus would serve to optimize ribosomal fidelity. In Cupriavidus necator (strain ATCC 17699 / DSM 428 / KCTC 22496 / NCIMB 10442 / H16 / Stanier 337) (Ralstonia eutropha), this protein is Dual-specificity RNA methyltransferase RlmN.